Reading from the N-terminus, the 458-residue chain is ATP synthase subunit beta (458 aa).

148–155 (GGAGVGKT) is a binding site for ATP.

Belongs to the ATPase alpha/beta chains family. As to quaternary structure, F-type ATPases have 2 components, CF(1) - the catalytic core - and CF(0) - the membrane proton channel. CF(1) has five subunits: alpha(3), beta(3), gamma(1), delta(1), epsilon(1). CF(0) has three main subunits: a(1), b(2) and c(9-12). The alpha and beta chains form an alternating ring which encloses part of the gamma chain. CF(1) is attached to CF(0) by a central stalk formed by the gamma and epsilon chains, while a peripheral stalk is formed by the delta and b chains.

Its subcellular location is the cell inner membrane. The enzyme catalyses ATP + H2O + 4 H(+)(in) = ADP + phosphate + 5 H(+)(out). Its function is as follows. Produces ATP from ADP in the presence of a proton gradient across the membrane. The catalytic sites are hosted primarily by the beta subunits. The polypeptide is ATP synthase subunit beta (Pseudomonas putida (strain ATCC 700007 / DSM 6899 / JCM 31910 / BCRC 17059 / LMG 24140 / F1)).